A 575-amino-acid chain; its full sequence is MMEITRETMSFTSTTPSARAPLGGRTTGNVTSQDRMLKIVTEMRSGAGSGLSPFGQNAASTIRDSREREKKEMSDLNDRLASYIEKVRFLEAQNRKLAADLDALRSKWGKDTHNIRNMYEGELVDAQKLIDETNKQRKDMEGQLKKMQDELAEMRRKLEDATKGREQDRAKIDALLVTLSNLEAEISLLKRRIAQLEDEVKRIKQENQRLLSELQRARTDLDQETLNRIDYQNQVQTLLEEIDFLRRVHDNEIKELQTLASRDTTPENREFFKNELSSAIRDIREEYDQVNNVHRNDMESWYRLKVQEIQTQSARQNMEQGYAKEEVKRLRTQLSDLRGKLADLESRNSLLEKQIQELNYQLEDDQRSYEAALNDRDSQIRKMREECQALMVELQMLLDTKQTLDAEIAIYRKMLEGEENRAGLKQLVEQVVKTHAITQETDTETMRVVKGETASRQSFQRSAKGNVSIHEASPDGKFIVLQNTHRAKDEAIGEWKLKRRIDGKRENVYTLPRDFVLRAGKTLKIFARNQGVASPPDQLVYDAEDSFGSGNNVQTILFNKEGEERATHIQRQSTA.

Disordered regions lie at residues 1–30 (MMEITRETMSFTSTTPSARAPLGGRTTGNV) and 45–72 (SGAGSGLSPFGQNAASTIRDSREREKKE). The segment at 1-72 (MMEITRETMS…RDSREREKKE (72 aa)) is head. Residues 7 to 17 (ETMSFTSTTPS) are compositionally biased toward polar residues. The span at 63–72 (RDSREREKKE) shows a compositional bias: basic and acidic residues. The IF rod domain occupies 69 to 422 (EKKEMSDLND…KMLEGEENRA (354 aa)). The coil 1A stretch occupies residues 73-104 (MSDLNDRLASYIEKVRFLEAQNRKLAADLDAL). The linker 1 stretch occupies residues 105–118 (RSKWGKDTHNIRNM). Residues 119–256 (YEGELVDAQK…RVHDNEIKEL (138 aa)) are coil 1B. Positions 257-274 (QTLASRDTTPENREFFKN) are linker 12. The segment at 275–422 (ELSSAIRDIR…KMLEGEENRA (148 aa)) is coil 2. The segment at 423-572 (GLKQLVEQVV…EERATHIQRQ (150 aa)) is tail. The LTD domain maps to 455 to 572 (SRQSFQRSAK…EERATHIQRQ (118 aa)).

This sequence belongs to the intermediate filament family. Forms some heteromeric filaments with ifb-1. Isoform d is abundantly expressed in the marginal cells of the pharynx, forming apicobasally oriented thick filament bundles that are attached to the apical and basal plasma membrane by hemi-adherens junctions. Expression of isoform c is also seen in the excretory cells and in the uterus. Isoform c is detectable in the amphid sensory neurins and the pharyngeal-intestinal valve. Both isoform c and isoform d are expressed in the rectum and vulva and in some neurons of the tail. In larvae, expression is seen in the excretory cell, the vulva, the rectum and in the thick filament bundles of the pharynx. Expression in pharynx begins in late embryos.

Its subcellular location is the cytoplasm. In terms of biological role, cytoplasmic intermediate filaments make up the structural component of the cytoskeleton providing mechanical strength to cells. Essential protein required during embryogenesis especially for survival past the L1 larva stage, involved in intestine morphogenesis. This is Intermediate filament protein ifa-1 (ifa-1) from Caenorhabditis elegans.